Consider the following 216-residue polypeptide: MRIILLGPPGAGKGTQAVGIVEKYNIPHISTGDIFRKNIKEGTELGKKAKEYMDQGLLVPDELTVGLVTDRISQEDCKNGFMLDGFPRNVAQGEHLDIFLKNAGISLDKVVNIEVDKSILVSRAVGRRICKSCGATYHVEFNPPKVEGVCDVCQGELYQRADDNEETVSKRIQVYLDETKPLVDYYSKQGIIADIKGDQAIDKVFEDIVAALGSGK.

10-15 (GAGKGT) is a binding site for ATP. Residues 30–59 (STGDIFRKNIKEGTELGKKAKEYMDQGLLV) are NMP. AMP is bound by residues T31, R36, 57–59 (LLV), 85–88 (GFPR), and Q92. Residues 126–163 (GRRICKSCGATYHVEFNPPKVEGVCDVCQGELYQRADD) are LID. R127 serves as a coordination point for ATP. Zn(2+)-binding residues include C130 and C133. An ATP-binding site is contributed by 136 to 137 (TY). Zn(2+) contacts are provided by C150 and C153. AMP is bound by residues R160 and R171. Q199 contributes to the ATP binding site.

It belongs to the adenylate kinase family. As to quaternary structure, monomer.

Its subcellular location is the cytoplasm. The catalysed reaction is AMP + ATP = 2 ADP. It functions in the pathway purine metabolism; AMP biosynthesis via salvage pathway; AMP from ADP: step 1/1. In terms of biological role, catalyzes the reversible transfer of the terminal phosphate group between ATP and AMP. Plays an important role in cellular energy homeostasis and in adenine nucleotide metabolism. The protein is Adenylate kinase of Clostridioides difficile (strain 630) (Peptoclostridium difficile).